The sequence spans 83 residues: Cobrotoxin homolog (83 aa).

Positions 1–21 (METLLLTLLVVTIVCLDLGYT) are cleaved as a signal peptide. Disulfide bonds link Cys-24–Cys-45, Cys-38–Cys-62, Cys-64–Cys-75, and Cys-76–Cys-81.

It belongs to the three-finger toxin family. Short-chain subfamily. Type I alpha-neurotoxin sub-subfamily. As to expression, expressed by the venom gland.

It is found in the secreted. Binds to muscle nicotinic acetylcholine receptor (nAChR) and inhibit acetylcholine from binding to the receptor, thereby impairing neuromuscular transmission. The chain is Cobrotoxin homolog from Naja naja (Indian cobra).